The chain runs to 124 residues: Large ribosomal subunit protein bL21 (124 aa).

This sequence belongs to the bacterial ribosomal protein bL21 family. In terms of assembly, part of the 50S ribosomal subunit. Contacts protein L20.

Functionally, this protein binds to 23S rRNA in the presence of protein L20. This chain is Large ribosomal subunit protein bL21, found in Synechococcus sp. (strain WH7803).